The sequence spans 451 residues: UDP-N-acetylmuramoylalanine--D-glutamate ligase (451 aa).

119-125 serves as a coordination point for ATP; it reads GSNGKTT.

The protein belongs to the MurCDEF family.

The protein localises to the cytoplasm. The enzyme catalyses UDP-N-acetyl-alpha-D-muramoyl-L-alanine + D-glutamate + ATP = UDP-N-acetyl-alpha-D-muramoyl-L-alanyl-D-glutamate + ADP + phosphate + H(+). It participates in cell wall biogenesis; peptidoglycan biosynthesis. Functionally, cell wall formation. Catalyzes the addition of glutamate to the nucleotide precursor UDP-N-acetylmuramoyl-L-alanine (UMA). This chain is UDP-N-acetylmuramoylalanine--D-glutamate ligase, found in Streptococcus mutans serotype c (strain ATCC 700610 / UA159).